A 281-amino-acid chain; its full sequence is Release factor glutamine methyltransferase (281 aa).

S-adenosyl-L-methionine contacts are provided by Glu-141 and Asn-185. Position 185–188 (185–188 (NPPY)) interacts with substrate.

The protein belongs to the protein N5-glutamine methyltransferase family. PrmC subfamily.

It carries out the reaction L-glutaminyl-[peptide chain release factor] + S-adenosyl-L-methionine = N(5)-methyl-L-glutaminyl-[peptide chain release factor] + S-adenosyl-L-homocysteine + H(+). Methylates the class 1 translation termination release factors RF1/PrfA and RF2/PrfB on the glutamine residue of the universally conserved GGQ motif. In Mycolicibacterium smegmatis (strain ATCC 700084 / mc(2)155) (Mycobacterium smegmatis), this protein is Release factor glutamine methyltransferase.